The primary structure comprises 129 residues: MGGGGNGRGSGEERREKRSGASEGEDGMVSPERPAFMEHSRPVGYHPQEDESQLPNHLETRVTVYRSHASQLKTADSPTLFLLWLSPVSSSPSRSPSSSEEYHPLSCGSRSASTNETRRRLSTADWLWW.

2 disordered regions span residues methionine 1 to histidine 57 and proline 87 to tryptophan 129. The span at serine 10–glycine 20 shows a compositional bias: basic and acidic residues. Residues proline 87–serine 99 are compositionally biased toward low complexity.

This is an uncharacterized protein from Homo sapiens (Human).